Reading from the N-terminus, the 372-residue chain is Heat-inducible transcription repressor HrcA (372 aa).

The interval 296–331 (VSSGYGRSGEAGEPAGNDPVGEPETESETESQTNDM) is disordered.

It belongs to the HrcA family.

Negative regulator of class I heat shock genes (grpE-dnaK-dnaJ and groELS operons). Prevents heat-shock induction of these operons. This is Heat-inducible transcription repressor HrcA from Bifidobacterium longum subsp. infantis (strain ATCC 15697 / DSM 20088 / JCM 1222 / NCTC 11817 / S12).